The chain runs to 382 residues: Queuine tRNA-ribosyltransferase (382 aa).

The active-site Proton acceptor is the D93. Substrate is bound by residues 93–97 (DSGGF), D147, Q191, and G218. Residues 249-255 (GVGKPED) form an RNA binding region. The active-site Nucleophile is the D268. The segment at 273–277 (TRNAR) is RNA binding; important for wobble base 34 recognition. Zn(2+) is bound by residues C306, C308, C311, and H337.

This sequence belongs to the queuine tRNA-ribosyltransferase family. In terms of assembly, homodimer. Within each dimer, one monomer is responsible for RNA recognition and catalysis, while the other monomer binds to the replacement base PreQ1. It depends on Zn(2+) as a cofactor.

The enzyme catalyses 7-aminomethyl-7-carbaguanine + guanosine(34) in tRNA = 7-aminomethyl-7-carbaguanosine(34) in tRNA + guanine. The protein operates within tRNA modification; tRNA-queuosine biosynthesis. Catalyzes the base-exchange of a guanine (G) residue with the queuine precursor 7-aminomethyl-7-deazaguanine (PreQ1) at position 34 (anticodon wobble position) in tRNAs with GU(N) anticodons (tRNA-Asp, -Asn, -His and -Tyr). Catalysis occurs through a double-displacement mechanism. The nucleophile active site attacks the C1' of nucleotide 34 to detach the guanine base from the RNA, forming a covalent enzyme-RNA intermediate. The proton acceptor active site deprotonates the incoming PreQ1, allowing a nucleophilic attack on the C1' of the ribose to form the product. After dissociation, two additional enzymatic reactions on the tRNA convert PreQ1 to queuine (Q), resulting in the hypermodified nucleoside queuosine (7-(((4,5-cis-dihydroxy-2-cyclopenten-1-yl)amino)methyl)-7-deazaguanosine). This Haemophilus influenzae (strain PittEE) protein is Queuine tRNA-ribosyltransferase.